The sequence spans 269 residues: Formamidopyrimidine-DNA glycosylase (269 aa).

Proline 2 functions as the Schiff-base intermediate with DNA in the catalytic mechanism. The Proton donor role is filled by glutamate 3. Lysine 57 (proton donor; for beta-elimination activity) is an active-site residue. DNA is bound by residues histidine 90, arginine 109, and lysine 150. The FPG-type zinc-finger motif lies at 235–269; sequence QVYGRKGEPCRVCGTPIVATKHAQRATFYCRQCQK. Residue arginine 259 is the Proton donor; for delta-elimination activity of the active site.

Belongs to the FPG family. As to quaternary structure, monomer. Requires Zn(2+) as cofactor.

It carries out the reaction Hydrolysis of DNA containing ring-opened 7-methylguanine residues, releasing 2,6-diamino-4-hydroxy-5-(N-methyl)formamidopyrimidine.. The enzyme catalyses 2'-deoxyribonucleotide-(2'-deoxyribose 5'-phosphate)-2'-deoxyribonucleotide-DNA = a 3'-end 2'-deoxyribonucleotide-(2,3-dehydro-2,3-deoxyribose 5'-phosphate)-DNA + a 5'-end 5'-phospho-2'-deoxyribonucleoside-DNA + H(+). Functionally, involved in base excision repair of DNA damaged by oxidation or by mutagenic agents. Acts as a DNA glycosylase that recognizes and removes damaged bases. Has a preference for oxidized purines, such as 7,8-dihydro-8-oxoguanine (8-oxoG). Has AP (apurinic/apyrimidinic) lyase activity and introduces nicks in the DNA strand. Cleaves the DNA backbone by beta-delta elimination to generate a single-strand break at the site of the removed base with both 3'- and 5'-phosphates. This chain is Formamidopyrimidine-DNA glycosylase, found in Escherichia coli O6:H1 (strain CFT073 / ATCC 700928 / UPEC).